The following is a 576-amino-acid chain: Arginine--tRNA ligase (576 aa).

Positions 122–132 (PNVAKEMHVGH) match the 'HIGH' region motif.

Belongs to the class-I aminoacyl-tRNA synthetase family. In terms of assembly, monomer.

Its subcellular location is the cytoplasm. The catalysed reaction is tRNA(Arg) + L-arginine + ATP = L-arginyl-tRNA(Arg) + AMP + diphosphate. This Photobacterium profundum (strain SS9) protein is Arginine--tRNA ligase.